The chain runs to 571 residues: Adenine deaminase (571 aa).

It belongs to the metallo-dependent hydrolases superfamily. Adenine deaminase family. Mn(2+) is required as a cofactor.

It catalyses the reaction adenine + H2O + H(+) = hypoxanthine + NH4(+). The protein is Adenine deaminase of Dehalococcoides mccartyi (strain ATCC BAA-2100 / JCM 16839 / KCTC 5957 / BAV1).